We begin with the raw amino-acid sequence, 902 residues long: AP-4 complex accessory subunit RUSC1 (902 aa).

4 disordered regions span residues 31 to 67 (ELQE…SNSP), 81 to 155 (LENR…PGTC), 189 to 227 (QDVP…KTEP), and 247 to 450 (KTTE…AQAG). The segment covering 94 to 112 (AASPSDPGCSSSLSSCSDL) has biased composition (low complexity). Positions 249-261 (TENNNTGWKNNGN) are enriched in low complexity. Residues 277 to 289 (WKTNTRITDSGSK) show a composition bias toward polar residues. Residues 291–309 (DAGKIDGGWRSDVSEEPVP) show a composition bias toward basic and acidic residues. 2 stretches are compositionally biased toward pro residues: residues 381–390 (PAPPVPPRDP) and 398–407 (PPRPPPPPVP). Low complexity predominate over residues 433–450 (PAAGEEAPAAKEPGAQAG). Residues 470 to 605 (MAEAQSGTGQ…FHAFILGLLN (136 aa)) form an interaction with TRAF6 region. The RUN domain maps to 522–666 (DVGHLVLTTL…LTFHLDLLFE (145 aa)). The interval 606 to 672 (TKQLELWFSS…LLFEHHHHLP (67 aa)) is interaction with IKBKG. Disordered stretches follow at residues 706 to 729 (LRGT…PGSW) and 747 to 776 (GFPL…TDEM). Positions 844-902 (QTHRAVRALCDHTAARPDQLSFRRGEVLRVITTVDEDWLRCGRDGMEGLVPVGYTSLVL) constitute an SH3 domain.

As to quaternary structure, associated component of the adapter-like complex 4 (AP-4). Interacts with IKBKG and TRAF6. Interacts with F-actin, acetylated actin, TUBB3, STX1A, KIF5B and KLC1. Phosphorylated on serine residues following nuclear translocation. In terms of processing, polyubiquitinated; polyubiquitination involves TRAF6. As to expression, predominantly expressed in brain.

Its subcellular location is the cytoplasm. It localises to the nucleus. It is found in the cytoskeleton. The protein resides in the cytoplasmic vesicle. The protein localises to the early endosome. Its subcellular location is the postsynaptic density. It localises to the golgi apparatus. Its function is as follows. Associates with the adapter-like complex 4 (AP-4) and may therefore play a role in vesicular trafficking of proteins at the trans-Golgi network. Signaling adapter which plays a role in neuronal differentiation. Involved in regulation of NGF-dependent neurite outgrowth. May play a role in neuronal vesicular trafficking, specifically involving pre-synaptic membrane proteins. Seems to be involved in signaling pathways that are regulated by the prolonged activation of MAPK. Can regulate the polyubiquitination of IKBKG and thus may be involved in regulation of the NF-kappa-B pathway. The protein is AP-4 complex accessory subunit RUSC1 of Homo sapiens (Human).